The following is a 233-amino-acid chain: 2-phytyl-1,4-naphtoquinone methyltransferase (233 aa).

This sequence belongs to the class I-like SAM-binding methyltransferase superfamily. MenG/UbiE family.

It catalyses the reaction demethylphylloquinol + S-adenosyl-L-methionine = phylloquinol + S-adenosyl-L-homocysteine + H(+). Its pathway is cofactor biosynthesis; phylloquinone biosynthesis. Its function is as follows. Methyltransferase required for the conversion of 2-phytyl-1,4-beta-naphthoquinol to phylloquinol. This chain is 2-phytyl-1,4-naphtoquinone methyltransferase, found in Synechococcus elongatus (strain ATCC 33912 / PCC 7942 / FACHB-805) (Anacystis nidulans R2).